A 222-amino-acid polypeptide reads, in one-letter code: N-(5'-phosphoribosyl)anthranilate isomerase (222 aa).

This sequence belongs to the TrpF family.

The catalysed reaction is N-(5-phospho-beta-D-ribosyl)anthranilate = 1-(2-carboxyphenylamino)-1-deoxy-D-ribulose 5-phosphate. Its pathway is amino-acid biosynthesis; L-tryptophan biosynthesis; L-tryptophan from chorismate: step 3/5. This Brucella abortus (strain S19) protein is N-(5'-phosphoribosyl)anthranilate isomerase.